A 187-amino-acid polypeptide reads, in one-letter code: Putative manganese efflux pump MntP (187 aa).

The next 6 membrane-spanning stretches (helical) occupy residues 3 to 23 (MSAT…ASIG), 41 to 61 (LIFG…GFFA), 62 to 82 (SQYI…ILGG), 107 to 129 (LLVC…LAFL), 143 to 163 (ATMI…PILG), and 166 to 186 (AEII…YEHL).

This sequence belongs to the MntP (TC 9.B.29) family.

The protein resides in the cell inner membrane. Probably functions as a manganese efflux pump. This is Putative manganese efflux pump MntP from Pectobacterium atrosepticum (strain SCRI 1043 / ATCC BAA-672) (Erwinia carotovora subsp. atroseptica).